A 201-amino-acid polypeptide reads, in one-letter code: Ribonuclease HII (201 aa).

Positions 12–201 (DLVAGVDEVG…VRELLDASVE (190 aa)) constitute an RNase H type-2 domain. A divalent metal cation is bound by residues D18, E19, and D110.

The protein belongs to the RNase HII family. The cofactor is Mn(2+). Requires Mg(2+) as cofactor.

The protein resides in the cytoplasm. It catalyses the reaction Endonucleolytic cleavage to 5'-phosphomonoester.. Its function is as follows. Endonuclease that specifically degrades the RNA of RNA-DNA hybrids. This chain is Ribonuclease HII, found in Pseudomonas paraeruginosa (strain DSM 24068 / PA7) (Pseudomonas aeruginosa (strain PA7)).